The chain runs to 1040 residues: Multidrug resistance protein MdtB (1040 aa).

The next 11 membrane-spanning stretches (helical) occupy residues 15–37 (LFIM…GIIG), 345–362 (FELM…YLFL), 367–389 (ATII…MVFL), 396–418 (LTLM…VIEN), 438–460 (GEIG…PLLF), 472–494 (FAIT…TPMM), 535–557 (HPWL…WVFI), 867–889 (VWLI…ESFI), 909–931 (LMIA…IGIV), 968–990 (ILMT…GVGA), and 1000–1022 (MVGG…YLLF).

Belongs to the resistance-nodulation-cell division (RND) (TC 2.A.6) family. MdtB subfamily. Part of a tripartite efflux system composed of MdtA, MdtB and MdtC. MdtB forms a heteromultimer with MdtC.

Its subcellular location is the cell inner membrane. Functionally, the MdtABC tripartite complex confers resistance against novobiocin and deoxycholate. In Escherichia coli O157:H7, this protein is Multidrug resistance protein MdtB.